A 404-amino-acid polypeptide reads, in one-letter code: DNA gyrase subunit B (404 aa).

Residues 321–404 (SEIYIVEGDS…VIIMTDADVD (84 aa)) enclose the Toprim domain. The Mg(2+) site is built by glutamate 327, aspartate 400, and aspartate 402.

It belongs to the type II topoisomerase GyrB family. Heterotetramer, composed of two GyrA and two GyrB chains. In the heterotetramer, GyrA contains the active site tyrosine that forms a transient covalent intermediate with DNA, while GyrB binds cofactors and catalyzes ATP hydrolysis. Mg(2+) is required as a cofactor. The cofactor is Mn(2+). It depends on Ca(2+) as a cofactor.

The protein resides in the cytoplasm. It carries out the reaction ATP-dependent breakage, passage and rejoining of double-stranded DNA.. Functionally, a type II topoisomerase that negatively supercoils closed circular double-stranded (ds) DNA in an ATP-dependent manner to modulate DNA topology and maintain chromosomes in an underwound state. Negative supercoiling favors strand separation, and DNA replication, transcription, recombination and repair, all of which involve strand separation. Also able to catalyze the interconversion of other topological isomers of dsDNA rings, including catenanes and knotted rings. Type II topoisomerases break and join 2 DNA strands simultaneously in an ATP-dependent manner. In Bacillus cereus, this protein is DNA gyrase subunit B (gyrB).